Consider the following 259-residue polypeptide: MNQFIPRGTSKISARGLNVHYGEKQALHDIDLDIPAGEVTALIGPSGCGKSTFLRCINRMNDMVDGAKVTGSLTLDGSDVYDRSLDVVQLRARVGMVFQKPNPFPKSIYDNVAYGPRIHGLARDQAELDEIVMNSLEKAGLLAEVESRLSESGTGLSGGQQQRLCIARAIAVAPEVILMDEPCSALDPIATAKVEELIDELRDNYTIVIVTHSMQQAARVSQRTAFFHLGKLIEVGGTEEIFTNPKEPLTQGYITGRFG.

An ABC transporter domain is found at 12-254 (ISARGLNVHY…PKEPLTQGYI (243 aa)). 44–51 (GPSGCGKS) lines the ATP pocket.

It belongs to the ABC transporter superfamily. Phosphate importer (TC 3.A.1.7) family. In terms of assembly, the complex is composed of two ATP-binding proteins (PstB), two transmembrane proteins (PstC and PstA) and a solute-binding protein (PstS).

Its subcellular location is the cell inner membrane. It catalyses the reaction phosphate(out) + ATP + H2O = ADP + 2 phosphate(in) + H(+). Part of the ABC transporter complex PstSACB involved in phosphate import. Responsible for energy coupling to the transport system. In Paramagnetospirillum magneticum (strain ATCC 700264 / AMB-1) (Magnetospirillum magneticum), this protein is Phosphate import ATP-binding protein PstB 2.